The sequence spans 549 residues: MPLSTAGVLSSASTASNRSRNRPRYRTKALSSEVDESLFGAIKPLTRSDSPIVLLRDKHAIRKTLTALGLDHKPETIQLITRDMVRELIIPTKDPSGQSLIMSPEEFERIKWASHVLTKEELEAREQAFKKEKEAIVDTVTTRKKIMKQKEMVWRNNRKLSDLEEVAKERAQNLLQRANQLRMEQEEELKDMKKIILNAKCHAIRDAQILEKQLIQKELDAEEKRLDQMMEVERQKSVQRQEELDRKRREERIRGRRHIVEQMEKNQEERSLLAEQREQEKEQMLEYMEKLQEEDLRDLEQRHQQKLKMQAEIKRINDENQRQKAELLAQEKLADQMVMEFTKKKMAREAEFEAEQERIRREKEKEIARLRAMQEKAQDYQAEQDALRAKRNQEVADREWRRKEKENAQKKMETEAKLRKSRLEQVAFKEHTLAVQVQRDRDEFERILRAQREQIEKERLEEEKKATGRLQHANELRRQVRENQQKQVQARIATFDEGRRLKEEAQKRRERIEDIKRKKLEELRATGLPEKYCIEAERKANIPVNTSVN.

A disordered region spans residues Met1–Thr27. Coiled-coil stretches lie at residues Lys119–Val232 and Ile259–Gln393. The tract at residues Arg391–Ala416 is disordered.

This sequence belongs to the CFAP45 family. Microtubule inner protein component of sperm flagellar doublet microtubules. Interacts with AK8; dimerization with AK8 may create a cavity at the interface of the dimer that can accommodate AMP. Interacts with CFAP52. Interacts with ENKUR. Directly interacts with DNALI1. Interacts with DNAH11. Interacts with DNAI1. In terms of tissue distribution, expressed in trachea multiciliated cells.

The protein resides in the cytoplasm. The protein localises to the cytoskeleton. Its subcellular location is the cilium axoneme. It is found in the flagellum axoneme. It localises to the cell projection. The protein resides in the cilium. The protein localises to the flagellum. Microtubule inner protein (MIP) part of the dynein-decorated doublet microtubules (DMTs) in cilia axoneme, which is required for motile cilia beating. It is an AMP-binding protein that may facilitate dynein ATPase-dependent ciliary and flagellar beating via adenine nucleotide homeostasis. May function as a donor of AMP to AK8 and hence promote ADP production. The polypeptide is Cilia- and flagella-associated protein 45 (Bos taurus (Bovine)).